Reading from the N-terminus, the 151-residue chain is uncharacterized protein (151 aa).

4Fe-4S ferredoxin-type domains lie at 4-32 (KIIV…ESRV), 33-63 (RKVD…YLKD), and 64-93 (GIPI…IKNR). Residues cysteine 13, cysteine 16, cysteine 19, cysteine 23, cysteine 42, cysteine 45, cysteine 50, cysteine 54, cysteine 73, cysteine 76, cysteine 79, cysteine 83, cysteine 98, cysteine 101, cysteine 111, and cysteine 115 each contribute to the [4Fe-4S] cluster site.

[4Fe-4S] cluster is required as a cofactor.

This is an uncharacterized protein from Methanocaldococcus jannaschii (strain ATCC 43067 / DSM 2661 / JAL-1 / JCM 10045 / NBRC 100440) (Methanococcus jannaschii).